A 262-amino-acid polypeptide reads, in one-letter code: Small ribosomal subunit protein eS4 (262 aa).

In terms of domain architecture, S4 RNA-binding spans 42–104 (LPLILILRNR…TNEDFRLLYD (63 aa)).

The protein belongs to the eukaryotic ribosomal protein eS4 family.

The protein localises to the cytoplasm. The protein is Small ribosomal subunit protein eS4 (RPS4) of Gossypium hirsutum (Upland cotton).